Here is a 301-residue protein sequence, read N- to C-terminus: Small ribosomal subunit biogenesis GTPase RsgA (301 aa).

Residues 65-224 (YNQLIRPKVA…LVDTPGFGNL (160 aa)) form the CP-type G domain. Residues 115 to 118 (SKYD) and 167 to 175 (GNSGVGKST) each bind GTP. Residues Cys247, Cys252, His254, and Cys260 each contribute to the Zn(2+) site.

Belongs to the TRAFAC class YlqF/YawG GTPase family. RsgA subfamily. As to quaternary structure, monomer. Associates with 30S ribosomal subunit, binds 16S rRNA. It depends on Zn(2+) as a cofactor.

It localises to the cytoplasm. In terms of biological role, one of several proteins that assist in the late maturation steps of the functional core of the 30S ribosomal subunit. Helps release RbfA from mature subunits. May play a role in the assembly of ribosomal proteins into the subunit. Circularly permuted GTPase that catalyzes slow GTP hydrolysis, GTPase activity is stimulated by the 30S ribosomal subunit. The polypeptide is Small ribosomal subunit biogenesis GTPase RsgA (Ureaplasma urealyticum serovar 10 (strain ATCC 33699 / Western)).